Reading from the N-terminus, the 334-residue chain is S-adenosylmethionine decarboxylase proenzyme 1 (334 aa).

Residue Phe7 participates in substrate binding. Catalysis depends on residues Glu8 and Glu11. Glu67 provides a ligand contact to substrate. Ser68 acts as the Schiff-base intermediate with substrate; via pyruvic acid in catalysis. Ser68 is subject to Pyruvic acid (Ser); by autocatalysis. Cys82 serves as the catalytic Proton donor; for catalytic activity. Phe223 contributes to the substrate binding site. Catalysis depends on proton acceptor; for processing activity residues Ser229 and His243. Residue Glu247 participates in substrate binding. The residue at position 298 (Ser298) is a Phosphoserine.

This sequence belongs to the eukaryotic AdoMetDC family. Heterotetramer of two alpha and two beta chains. Pyruvate serves as cofactor. Is synthesized initially as an inactive proenzyme. Formation of the active enzyme involves a self-maturation process in which the active site pyruvoyl group is generated from an internal serine residue via an autocatalytic post-translational modification. Two non-identical subunits are generated from the proenzyme in this reaction, and the pyruvate is formed at the N-terminus of the alpha chain, which is derived from the carboxyl end of the proenzyme. The post-translation cleavage follows an unusual pathway, termed non-hydrolytic serinolysis, in which the side chain hydroxyl group of the serine supplies its oxygen atom to form the C-terminus of the beta chain, while the remainder of the serine residue undergoes an oxidative deamination to produce ammonia and the pyruvoyl group blocking the N-terminus of the alpha chain. Expressed in embryonic stem cells; subsequently down-regulated in differentiating neural precursor cells.

It carries out the reaction S-adenosyl-L-methionine + H(+) = S-adenosyl 3-(methylsulfanyl)propylamine + CO2. The protein operates within amine and polyamine biosynthesis; S-adenosylmethioninamine biosynthesis; S-adenosylmethioninamine from S-adenosyl-L-methionine: step 1/1. Its function is as follows. Essential for biosynthesis of the polyamines spermidine and spermine. Promotes maintenance and self-renewal of embryonic stem cells, by maintaining spermine levels. The sequence is that of S-adenosylmethionine decarboxylase proenzyme 1 (Amd1) from Mus musculus (Mouse).